An 81-amino-acid chain; its full sequence is Photosystem I iron-sulfur center (81 aa).

4Fe-4S ferredoxin-type domains follow at residues 2–31 (SHFV…MIPW) and 39–68 (IASA…VRVY). [4Fe-4S] cluster is bound by residues C11, C14, C17, C21, C48, C51, C54, and C58.

The eukaryotic PSI reaction center is composed of at least 11 subunits. [4Fe-4S] cluster serves as cofactor.

It localises to the plastid thylakoid membrane. It catalyses the reaction reduced [plastocyanin] + hnu + oxidized [2Fe-2S]-[ferredoxin] = oxidized [plastocyanin] + reduced [2Fe-2S]-[ferredoxin]. Functionally, apoprotein for the two 4Fe-4S centers FA and FB of photosystem I (PSI); essential for photochemical activity. FB is the terminal electron acceptor of PSI, donating electrons to ferredoxin. The C-terminus interacts with PsaA/B/D and helps assemble the protein into the PSI complex. Required for binding of PsaD and PsaE to PSI. PSI is a plastocyanin-ferredoxin oxidoreductase, converting photonic excitation into a charge separation, which transfers an electron from the donor P700 chlorophyll pair to the spectroscopically characterized acceptors A0, A1, FX, FA and FB in turn. This Cuscuta exaltata (Tall dodder) protein is Photosystem I iron-sulfur center.